The following is a 449-amino-acid chain: Type 3 secretion system ATPase (449 aa).

178-183 (GCGKTT) contributes to the ATP binding site.

This sequence belongs to the ATPase alpha/beta chains family. T3SS ATPase subfamily. As to quaternary structure, the core secretion machinery of the T3SS is composed of approximately 20 different proteins, including cytoplasmic components, a base, an export apparatus and a needle. This subunit is part of the cytosolic complex. Forms homododecamers. Comprises two hexameric rings that are probably stacked face-to-face by the association of their C-terminal domains. Also present as monomer and homohexamer in solution.

The protein resides in the cytoplasm. The catalysed reaction is ATP + H2O + cellular proteinSide 1 = ADP + phosphate + cellular proteinSide 2.. Its activity is regulated as follows. Oligomerization increases ATPase activity. Functionally, ATPase component of the type III secretion system (T3SS), also called injectisome, which is used to inject bacterial effector proteins into eukaryotic host cells. Acts as a molecular motor to provide the energy that is required for the export of proteins. Required for type III secretion apparatus (T3SA) formation, proper protein secretion, host cell invasion and virulence. May play a critical role in T3SS substrate recognition, disassembly of the effector/chaperone complex and unfolding of the effector in an ATP-dependent manner prior to secretion. The sequence is that of Type 3 secretion system ATPase from Pseudomonas savastanoi pv. phaseolicola (Pseudomonas syringae pv. phaseolicola).